The following is a 75-amino-acid chain: MNKSKRSSRRRMPPIRSGEIIDYKNISLLRRFVSEQGKILSRRMNRLTSKQQRLLTIAIKRARVLALLPFLNNEN.

It belongs to the bacterial ribosomal protein bS18 family. As to quaternary structure, part of the 30S ribosomal subunit.

The protein resides in the plastid. It is found in the chloroplast. This chain is Small ribosomal subunit protein bS18c (rps18), found in Marchantia polymorpha (Common liverwort).